Here is a 310-residue protein sequence, read N- to C-terminus: Endo-1,4-beta-xylanase B (310 aa).

The signal sequence occupies residues 1–19 (MISLSSVAIALTTVVGALA). Positions 33–223 (AITSSQTGTN…SSGSASMTVS (191 aa)) constitute a GH11 domain. Glutamate 119 acts as the Nucleophile in catalysis. Catalysis depends on glutamate 210, which acts as the Proton donor. The span at 218 to 227 (ASMTVSAGSS) shows a compositional bias: low complexity. The tract at residues 218-274 (ASMTVSAGSSSSGGSGSGSGSGSGSGSGSGSQTTTAGSSTGTGTGSGSGSGSGGSGG) is disordered. The span at 228 to 246 (SSGGSGSGSGSGSGSGSGS) shows a compositional bias: gly residues. Low complexity predominate over residues 247–256 (GSQTTTAGSS). A compositionally biased stretch (gly residues) spans 257 to 274 (TGTGTGSGSGSGSGGSGG). The CBM1 domain maps to 275 to 310 (NCAAQWGQCGGQGWNGPTCCSSGTCKASNQWYSQCL).

This sequence belongs to the glycosyl hydrolase 11 (cellulase G) family.

It is found in the secreted. It carries out the reaction Endohydrolysis of (1-&gt;4)-beta-D-xylosidic linkages in xylans.. The protein operates within glycan degradation; xylan degradation. In terms of biological role, endo-1,4-beta-xylanase involved in the hydrolysis of xylan, a major structural heterogeneous polysaccharide found in plant biomass representing the second most abundant polysaccharide in the biosphere, after cellulose. Hydrolyzes birchwood xylan, beechwood xylan, and oat spelt xylan to produce short-chain xylooligosaccharides, xylopentaose, xylotriose, and xylobiose as the main products. The polypeptide is Endo-1,4-beta-xylanase B (xynB) (Penicillium oxalicum).